Consider the following 330-residue polypeptide: Glucokinase (330 aa).

14–19 lines the ATP pocket; it reads ADIGGT.

Belongs to the bacterial glucokinase family.

It localises to the cytoplasm. It carries out the reaction D-glucose + ATP = D-glucose 6-phosphate + ADP + H(+). The polypeptide is Glucokinase (Colwellia psychrerythraea (strain 34H / ATCC BAA-681) (Vibrio psychroerythus)).